Here is a 310-residue protein sequence, read N- to C-terminus: Methionyl-tRNA formyltransferase (310 aa).

110-113 (SVLP) lines the (6S)-5,6,7,8-tetrahydrofolate pocket.

Belongs to the Fmt family.

The enzyme catalyses L-methionyl-tRNA(fMet) + (6R)-10-formyltetrahydrofolate = N-formyl-L-methionyl-tRNA(fMet) + (6S)-5,6,7,8-tetrahydrofolate + H(+). In terms of biological role, attaches a formyl group to the free amino group of methionyl-tRNA(fMet). The formyl group appears to play a dual role in the initiator identity of N-formylmethionyl-tRNA by promoting its recognition by IF2 and preventing the misappropriation of this tRNA by the elongation apparatus. In Mycolicibacterium vanbaalenii (strain DSM 7251 / JCM 13017 / BCRC 16820 / KCTC 9966 / NRRL B-24157 / PYR-1) (Mycobacterium vanbaalenii), this protein is Methionyl-tRNA formyltransferase.